Consider the following 125-residue polypeptide: Succinate dehydrogenase hydrophobic membrane anchor subunit (125 aa).

Topologically, residues 1–24 (MTYDFRAEIVKAKNTGSAKSGSHH) are cytoplasmic. The chain crosses the membrane as a helical span at residues 25-45 (WLLQRITAIILVLCSLWLLYF). The Periplasmic segment spans residues 46–67 (TLANKNSDVNIIIWELKRPINL). Residues 68–89 (IPLLIAVITSLYHAMLGMQVVI) form a helical membrane-spanning segment. His80 contacts heme. The Cytoplasmic portion of the chain corresponds to 90–99 (EDYISCNKLR). Residue Tyr92 coordinates a ubiquinone. The chain crosses the membrane as a helical span at residues 100–123 (NTLIIAVKLFSILTIVAFIVAVFY).

In terms of assembly, part of an enzyme complex containing four subunits: a flavoprotein, an iron-sulfur protein, plus two membrane-anchoring proteins, SdhC and SdhD. Requires heme as cofactor.

It localises to the cell inner membrane. Its pathway is carbohydrate metabolism; tricarboxylic acid cycle. Functionally, membrane-anchoring subunit of succinate dehydrogenase (SDH). The polypeptide is Succinate dehydrogenase hydrophobic membrane anchor subunit (sdhD) (Rickettsia bellii (strain RML369-C)).